A 598-amino-acid chain; its full sequence is Membrane protein insertase YidC (598 aa).

A helical transmembrane segment spans residues 7 to 27 (NYFIAIALSVLIVLGWQFLYM). A disordered region spans residues 37–76 (AQEAQKAQQQTEQVQQPAAGGQTPAQTSGAAPSGQAAATA). Positions 40-76 (AQKAQQQTEQVQQPAAGGQTPAQTSGAAPSGQAAATA) are enriched in low complexity. 4 helical membrane-spanning segments follow: residues 377 to 397 (FGVAILCTTIVVKALFFPLAS), 447 to 467 (WPVALQIPIFFSLYKVIYITI), 492 to 512 (LFGLLPFEGPTLLHLGVWPLI), and 538 to 558 (WMPLVFMFMLASFPAGLVIYW).

Belongs to the OXA1/ALB3/YidC family. Type 1 subfamily. Interacts with the Sec translocase complex via SecD. Specifically interacts with transmembrane segments of nascent integral membrane proteins during membrane integration.

The protein resides in the cell inner membrane. Its function is as follows. Required for the insertion and/or proper folding and/or complex formation of integral membrane proteins into the membrane. Involved in integration of membrane proteins that insert both dependently and independently of the Sec translocase complex, as well as at least some lipoproteins. Aids folding of multispanning membrane proteins. This chain is Membrane protein insertase YidC, found in Rhizobium johnstonii (strain DSM 114642 / LMG 32736 / 3841) (Rhizobium leguminosarum bv. viciae).